The primary structure comprises 276 residues: Zinc transporter ZTP29 (276 aa).

Residues methionine 1 to leucine 6 lie on the Cytoplasmic side of the membrane. A helical membrane pass occupies residues valine 7–valine 27. At leucine 28 to lysine 35 the chain is on the lumenal side. A helical transmembrane segment spans residues methionine 36 to leucine 56. The Cytoplasmic portion of the chain corresponds to alanine 57 to serine 63. The chain crosses the membrane as a helical span at residues isoleucine 64–threonine 84. At lysine 85–serine 123 the chain is on the lumenal side. A helical membrane pass occupies residues glycine 124–leucine 144. Residues glycine 145–leucine 156 lie on the Cytoplasmic side of the membrane. Residues alanine 157–phenylalanine 177 traverse the membrane as a helical segment. The Lumenal segment spans residues alanine 178–lysine 187. The helical transmembrane segment at leucine 188–proline 208 threads the bilayer. Residues arginine 209–leucine 219 are Cytoplasmic-facing. A helical membrane pass occupies residues leucine 220–phenylalanine 240. At aspartate 241–lysine 250 the chain is on the lumenal side. A helical membrane pass occupies residues alanine 251–proline 271. Residues glutamate 272–leucine 276 are Cytoplasmic-facing.

This sequence belongs to the ZIP transporter (TC 2.A.5) family. ZupT subfamily. Expressed in hypocotyls, cotyledons, leaves and anthers.

It is found in the endoplasmic reticulum membrane. Its function is as follows. Zinc transporter involved response to salt stress. May act through the regulation of zinc levels required to induce the unfolded protein response (UPR) pathway. The protein is Zinc transporter ZTP29 (ZTP29) of Arabidopsis thaliana (Mouse-ear cress).